A 1699-amino-acid chain; its full sequence is Genome polyprotein (1699 aa).

Positions Met1–Asp19 are enriched in low complexity. The tract at residues Met1–Glu78 is disordered. Residues Met1–Arg116 are interaction with host MAP1LC3A/LC3. Residues Gln46 to Asn74 show a composition bias toward pro residues. Positions Glu117–Gln330 are interaction with NTPase. Positions Arg233–Gln330 are interaction with NS4. Host ER membrane association regions lie at residues Lys250–Asn281 and Thr292–Gln330. Positions Gly331–Ala509 are interaction with NS1-2, NS4 and homooligomerization. Positions Leu465–Gln632 constitute an SF3 helicase domain. Position 495–502 (Gly495–Thr502) interacts with ATP. The important for mitochondrion targeting stretch occupies residues Ala586–Asp691. A functions as endoplasmic reticulum export signal region spans residues Tyr764–Gly770. Residues Arg801 to Thr850 are host membrane association. The segment at Gln843–Ser894 is disordered. Basic and acidic residues predominate over residues Thr850–Asp861. Residues Gly879 to Thr890 show a composition bias toward basic residues. The interval Asp899–Glu904 is acidic. Residue Tyr902 is modified to O-(5'-phospho-RNA)-tyrosine. The tract at residues Trp992–Glu1008 is interaction with host EIF4G. The Peptidase C37 domain occupies Ala1009 to Glu1189. Active-site for 3CLpro activity residues include His1038, Glu1062, and Cys1147. Residues Lys1425 to Lys1546 enclose the RdRp catalytic domain. Mg(2+) contacts are provided by Asp1429, Asp1431, Asp1533, and Glu1534.

Homodimer. Homooligomer. Interacts with NTPase; this interaction increases the proapoptotic activity of the NTPase and is crucial for the formation of the viral replication complex. Interacts with NS4; this interaction is crucial for the formation of the viral replication complex. Interacts (via N-terminus) with host VAPA. Interacts with host MAP1LC3A/LC3; this interaction does not seem to be linked to host autophagy, but rather plays a role in the formation of viral factories. As to quaternary structure, homooligomer. Interacts with NS1-2; this interaction increases the proapoptotic activity of the NTPase and is crucial for the formation of the viral replication complex. Interacts with NS4; this interaction increases the proapoptotic activity of the NTPase. In terms of assembly, homodimer. Monomer; in solution. Interacts with NTPase; this interaction increases the proapoptotic activity of the NTPase. Interacts with NS1-2; this interaction is crucial for the formation of the viral replication complex. As to quaternary structure, monomer. Interacts with the RNA-directed RNA polymerase; this interaction induces the multimerization of the RdRp and enhances its activity. Interacts with host IEF4G1; this interaction plays a role in translation of viral proteins. In terms of assembly, homohexamer; also forms fibrous hexameric oligomer. Interacts with the viral genome-linked protein; this interaction induces the multimerization of the RdRp and enhances its activity. Requires Mg(2+) as cofactor. The cofactor is Mn(2+). Specific enzymatic cleavages in vivo yield mature proteins. 3CLpro is first autocatalytically cleaved, then processes the whole polyprotein. NS1/2-3 and NS3-4 sites are cleaved rapidly and NS4-5, NS5-6, and NS6-7 sites are processed subsequently and less efficiently. Post-translationally, VPg is uridylylated by the polymerase and is covalently attached to the 5'-end of the polyadenylated genomic and subgenomic RNAs. This uridylylated form acts as a nucleotide-peptide primer for the polymerase. In terms of processing, cleaved by host CASP3/caspase 3 at 18-22 h.p.i. The cleavage allows NS1 secretion, which is essential for intestinal infection and resistance to IFN-lambda.

It is found in the host endoplasmic reticulum membrane. It localises to the secreted. Its subcellular location is the host mitochondrion. The protein resides in the host Golgi apparatus membrane. The protein localises to the host cytoplasm. It is found in the host perinuclear region. It catalyses the reaction a ribonucleoside 5'-triphosphate + H2O = a ribonucleoside 5'-diphosphate + phosphate + H(+). The catalysed reaction is Endopeptidase with a preference for cleavage when the P1 position is occupied by Glu-|-Xaa and the P1' position is occupied by Gly-|-Yaa.. The enzyme catalyses RNA(n) + a ribonucleoside 5'-triphosphate = RNA(n+1) + diphosphate. Induces the proliferation of the host smooth ER membranes forming long tubular structures. These remodeled membranes probably form the viral factories that contain the replication complex. May play a role in viral replication by interacting with host VAPA, a vesicle-associated membrane protein that plays a role in SNARE-mediated vesicle fusion. This interaction may target replication complex to intracellular membranes. Functionally, displays NTPase activity, but no helicase activity. Displays RNA chaperone-like activity and destabilizes dsRNA. Induces the formation of convoluted membranes derived from the host ER. These remodeled membranes probably form the viral factories that contain the replication complex. Initiates host cell death by targeting the mitochondrial outer membrane, leading to the permeabilization of mitochondria, programmed host cell death and viral egress. Externalization of host cardiolipin seems to be involved in the process. Probably plays a role in preventing the assembly of host stress granules. In terms of biological role, probable key protein responsible for the formation of membrane alterations by the virus. Induces the formation of convoluted membranes derived from the host ER. These remodeled membranes probably form the viral factories that contain the replication complex. May play a role in targeting replication complex to intracellular membranes. Its function is as follows. Viral genome-linked protein is covalently linked to the 5'-end of the positive-strand, negative-strand genomic RNAs and subgenomic RNA. Acts as a genome-linked replication primer. May recruit ribosome to viral RNA thereby promoting viral proteins translation. Interacts with host translation initiation complex to allow the translation of viral proteins. Induces the formation of aggregates of RNA-directed RNA polymerase in the presence of RNA. Through its interaction with the viral RNA-directed RNA polymerase, plays a crucial role in enhancing the polymerase activity. Processes the polyprotein. 3CLpro-RdRp is first released by autocleavage, then all other proteins are cleaved. May cleave polyadenylate-binding protein thereby inhibiting cellular translation. Functionally, replicates genomic and antigenomic RNA by recognizing replications specific signals. Also transcribes a subgenomic mRNA by initiating RNA synthesis internally on antigenomic RNA. This sgRNA codes for structural proteins. Catalyzes the covalent attachment VPg with viral RNAs. This chain is Genome polyprotein, found in Lordsdale virus (strain GII/Human/United Kingdom/Lordsdale/1993) (Human enteric calicivirus).